Consider the following 439-residue polypeptide: Putative phosphatidate cytidylyltransferase (439 aa).

The tract at residues 1-37 is disordered; the sequence is MARKRTNKRNNSDKENGNVGVVQNKDSASSKTTEPAR. Position 12 is a phosphoserine (Ser12). Residues 24–33 show a composition bias toward polar residues; the sequence is NKDSASSKTT. The next 7 helical transmembrane spans lie at 52–71, 76–98, 110–130, 145–165, 180–199, 245–265, and 321–341; these read FITR…TALA, WVVL…IASV, FINW…SIYA, LVLH…VLFV, FCWT…FMIN, GFLG…YVLM, and FHLA…GFFA.

It belongs to the CDS family. It depends on Mg(2+) as a cofactor.

It localises to the endoplasmic reticulum membrane. It catalyses the reaction a 1,2-diacyl-sn-glycero-3-phosphate + CTP + H(+) = a CDP-1,2-diacyl-sn-glycerol + diphosphate. The protein operates within phospholipid metabolism; CDP-diacylglycerol biosynthesis; CDP-diacylglycerol from sn-glycerol 3-phosphate: step 3/3. Supplies CDP-diacylglycerol, which may play an important role as both a precursor to phosphoinositide biosynthesis in the plasma membrane and as a negative effector of phosphatidylinositol 4-kinase activity, thereby exerting an effect on cell proliferation via a lipid-dependent signal transduction cascade. The polypeptide is Putative phosphatidate cytidylyltransferase (Schizosaccharomyces pombe (strain 972 / ATCC 24843) (Fission yeast)).